The chain runs to 183 residues: Cuticle protein 2 (183 aa).

A signal peptide spans 1–15 (MKLIVVAALIGVCAG). Positions 58 to 121 (SQGFQYVYDT…AQGAHLPTPP (64 aa)) constitute a Chitin-binding type R&amp;R domain.

The protein is Cuticle protein 2 of Lonomia obliqua (Moth).